Here is a 273-residue protein sequence, read N- to C-terminus: Large ribosomal subunit protein uL2cz/uL2cy (273 aa).

Disordered regions lie at residues 1-22 (MAKH…DRQV) and 225-273 (PVDH…RRRK).

Belongs to the universal ribosomal protein uL2 family. As to quaternary structure, part of the 50S ribosomal subunit.

Its subcellular location is the plastid. It localises to the chloroplast. This is Large ribosomal subunit protein uL2cz/uL2cy (rpl2-A) from Zea mays (Maize).